A 266-amino-acid polypeptide reads, in one-letter code: ATP synthase subunit a (266 aa).

6 helical membrane-spanning segments follow: residues 38-58 (KQML…ILAA), 99-119 (LLFS…IPVI), 126-146 (HVGG…IIGI), 162-182 (GVPW…NFLV), 191-211 (LFAT…GIEF), and 224-244 (SVLV…IMAL).

The protein belongs to the ATPase A chain family. F-type ATPases have 2 components, CF(1) - the catalytic core - and CF(0) - the membrane proton channel. CF(1) has five subunits: alpha(3), beta(3), gamma(1), delta(1), epsilon(1). CF(0) has three main subunits: a(1), b(2) and c(9-12). The alpha and beta chains form an alternating ring which encloses part of the gamma chain. CF(1) is attached to CF(0) by a central stalk formed by the gamma and epsilon chains, while a peripheral stalk is formed by the delta and b chains.

The protein resides in the cell membrane. In terms of biological role, key component of the proton channel; it plays a direct role in the translocation of protons across the membrane. The sequence is that of ATP synthase subunit a from Paenarthrobacter aurescens (strain TC1).